A 242-amino-acid polypeptide reads, in one-letter code: Methylthioribulose-1-phosphate dehydratase (242 aa).

Cys97 serves as a coordination point for substrate. Residues His115 and His117 each coordinate Zn(2+). Glu139 acts as the Proton donor/acceptor in catalysis. His195 is a binding site for Zn(2+).

This sequence belongs to the aldolase class II family. MtnB subfamily. In terms of assembly, homotetramer. Interacts with APAF1. May interact with CASP1. Zn(2+) is required as a cofactor.

The protein resides in the cytoplasm. The enzyme catalyses 5-(methylsulfanyl)-D-ribulose 1-phosphate = 5-methylsulfanyl-2,3-dioxopentyl phosphate + H2O. It participates in amino-acid biosynthesis; L-methionine biosynthesis via salvage pathway; L-methionine from S-methyl-5-thio-alpha-D-ribose 1-phosphate: step 2/6. Its function is as follows. Catalyzes the dehydration of methylthioribulose-1-phosphate (MTRu-1-P) into 2,3-diketo-5-methylthiopentyl-1-phosphate (DK-MTP-1-P). Functions in the methionine salvage pathway, which plays a key role in cancer, apoptosis, microbial proliferation and inflammation. May inhibit the CASP1-related inflammatory response (pyroptosis), the CASP9-dependent apoptotic pathway and the cytochrome c-dependent and APAF1-mediated cell death. This is Methylthioribulose-1-phosphate dehydratase from Bos taurus (Bovine).